Here is a 360-residue protein sequence, read N- to C-terminus: Phospho-N-acetylmuramoyl-pentapeptide-transferase (360 aa).

Transmembrane regions (helical) follow at residues 25–45, 73–93, 97–117, 142–162, 168–188, 199–219, 236–256, 263–283, 288–308, and 338–358; these read RGIL…PWMI, TMGG…WADL, YVWV…VDDY, VGAA…TLII, ASIP…VGSS, GLAI…CYLS, AGEL…FLWF, VFMG…IAVI, IVLF…VIQV, and VIVR…ATLK.

The protein belongs to the glycosyltransferase 4 family. MraY subfamily. Requires Mg(2+) as cofactor.

It is found in the cell inner membrane. The enzyme catalyses UDP-N-acetyl-alpha-D-muramoyl-L-alanyl-gamma-D-glutamyl-meso-2,6-diaminopimeloyl-D-alanyl-D-alanine + di-trans,octa-cis-undecaprenyl phosphate = di-trans,octa-cis-undecaprenyl diphospho-N-acetyl-alpha-D-muramoyl-L-alanyl-D-glutamyl-meso-2,6-diaminopimeloyl-D-alanyl-D-alanine + UMP. It participates in cell wall biogenesis; peptidoglycan biosynthesis. Its function is as follows. Catalyzes the initial step of the lipid cycle reactions in the biosynthesis of the cell wall peptidoglycan: transfers peptidoglycan precursor phospho-MurNAc-pentapeptide from UDP-MurNAc-pentapeptide onto the lipid carrier undecaprenyl phosphate, yielding undecaprenyl-pyrophosphoryl-MurNAc-pentapeptide, known as lipid I. In Pseudomonas fluorescens (strain SBW25), this protein is Phospho-N-acetylmuramoyl-pentapeptide-transferase.